The chain runs to 72 residues: ATP synthase subunit c (72 aa).

2 helical membrane passes run 1-21 (MSLG…GAGI) and 48-68 (MFIG…FSFI).

This sequence belongs to the ATPase C chain family. F-type ATPases have 2 components, F(1) - the catalytic core - and F(0) - the membrane proton channel. F(1) has five subunits: alpha(3), beta(3), gamma(1), delta(1), epsilon(1). F(0) has three main subunits: a(1), b(2) and c(10-14). The alpha and beta chains form an alternating ring which encloses part of the gamma chain. F(1) is attached to F(0) by a central stalk formed by the gamma and epsilon chains, while a peripheral stalk is formed by the delta and b chains.

It is found in the cell membrane. F(1)F(0) ATP synthase produces ATP from ADP in the presence of a proton or sodium gradient. F-type ATPases consist of two structural domains, F(1) containing the extramembraneous catalytic core and F(0) containing the membrane proton channel, linked together by a central stalk and a peripheral stalk. During catalysis, ATP synthesis in the catalytic domain of F(1) is coupled via a rotary mechanism of the central stalk subunits to proton translocation. Its function is as follows. Key component of the F(0) channel; it plays a direct role in translocation across the membrane. A homomeric c-ring of between 10-14 subunits forms the central stalk rotor element with the F(1) delta and epsilon subunits. The protein is ATP synthase subunit c of Geobacillus kaustophilus (strain HTA426).